The primary structure comprises 258 residues: Isoprenyl transferase (258 aa).

Residue D38 is part of the active site. D38 provides a ligand contact to Mg(2+). Residues 39–42 (GNGR), W43, R51, H55, and 83–85 (STE) contribute to the substrate site. N86 functions as the Proton acceptor in the catalytic mechanism. Residues W87, R89, R206, and 212–214 (RIS) contribute to the substrate site. Residue E225 coordinates Mg(2+).

The protein belongs to the UPP synthase family. As to quaternary structure, homodimer. Requires Mg(2+) as cofactor.

Catalyzes the condensation of isopentenyl diphosphate (IPP) with allylic pyrophosphates generating different type of terpenoids. In Bacillus cereus (strain ATCC 10987 / NRS 248), this protein is Isoprenyl transferase.